A 143-amino-acid polypeptide reads, in one-letter code: Cold shock domain-containing protein CG9705 (143 aa).

Residues 1 to 30 (MTEPRTPEKLLAAKPPVLHHNSHSPNASLQ) form a disordered region. Phosphoserine is present on residues Ser22, Ser24, Ser28, and Ser33. The 68-residue stretch at 54 to 121 (VVTGMVKSFS…KHQAVHVQIS (68 aa)) folds into the CSD domain. Phosphoserine occurs at positions 139 and 140.

The polypeptide is Cold shock domain-containing protein CG9705 (Drosophila melanogaster (Fruit fly)).